Consider the following 102-residue polypeptide: Large ribosomal subunit protein bL21 (102 aa).

The protein belongs to the bacterial ribosomal protein bL21 family. As to quaternary structure, part of the 50S ribosomal subunit. Contacts protein L20.

Functionally, this protein binds to 23S rRNA in the presence of protein L20. In Nitratidesulfovibrio vulgaris (strain ATCC 29579 / DSM 644 / CCUG 34227 / NCIMB 8303 / VKM B-1760 / Hildenborough) (Desulfovibrio vulgaris), this protein is Large ribosomal subunit protein bL21.